Consider the following 355-residue polypeptide: MADSTTMEHDGRGTKRKREADGGSGQGVGKGNSNAVKEGYGPNITEMVPRNIFNKGNHTIYHVVKTQKYLDFNYVTNQNPYIIPYQTAGFWGSMWDQTDIGNNQSINIMKALNAVALGVTWIKGEITFEVYSVTRQRLLTGTTNQTTWDFETSQNMFIADADREPENFNLETVAATGPLAQQTTQTLLFNSHNDRYTKYELPQRNQYTREINFQQLTNNYMWRPLDISKETNFRSLIPMSEGVYTKSENLRQTEFTYETTTYATSGATTRQTLFRNRTSYPRMHIAQPQVPDETGFMKFRYQVRMSTKLHLNFHMYPDYATNNNLEYMHRQTILLPQVAETNGIVACMPYEINTQ.

Positions 1-21 are enriched in basic and acidic residues; that stretch reads MADSTTMEHDGRGTKRKREAD. The disordered stretch occupies residues 1 to 41; the sequence is MADSTTMEHDGRGTKRKREADGGSGQGVGKGNSNAVKEGYG.

It belongs to the parvoviridae capsid protein family.

The protein resides in the virion. Its function is as follows. Capsid protein self-assembles to form an icosahedral capsid with a T=1 symmetry, about 22 nm in diameter, and consisting of 60 copies of size variants of the capsid proteins, which differ in the N-terminushe capsid encapsulates the genomic ssDNA. Capsid proteins are responsible for the attachment to host cell receptors. This attachment induces virion internalization predominantly through clathrin-dependent endocytosis. In Aedes albopictus densovirus (isolate Boublik/1994) (AalDNV), this protein is Capsid protein VP1/VP2 (VP).